We begin with the raw amino-acid sequence, 280 residues long: uncharacterized protein (280 aa).

The first 21 residues, 1–21 (MRPAIKVGLSTASVYPLRAEA), serve as a signal peptide directing secretion.

To M.leprae ML2432 and S.coelicolor SCO3347.

This is an uncharacterized protein from Mycobacterium tuberculosis (strain CDC 1551 / Oshkosh).